The primary structure comprises 331 residues: Biotin synthase (331 aa).

Positions S39–A264 constitute a Radical SAM core domain. Residues C54, C58, and C61 each coordinate [4Fe-4S] cluster. C98, C130, C190, and R262 together coordinate [2Fe-2S] cluster.

Belongs to the radical SAM superfamily. Biotin synthase family. Homodimer. [4Fe-4S] cluster serves as cofactor. [2Fe-2S] cluster is required as a cofactor.

It carries out the reaction (4R,5S)-dethiobiotin + (sulfur carrier)-SH + 2 reduced [2Fe-2S]-[ferredoxin] + 2 S-adenosyl-L-methionine = (sulfur carrier)-H + biotin + 2 5'-deoxyadenosine + 2 L-methionine + 2 oxidized [2Fe-2S]-[ferredoxin]. The protein operates within cofactor biosynthesis; biotin biosynthesis; biotin from 7,8-diaminononanoate: step 2/2. Its function is as follows. Catalyzes the conversion of dethiobiotin (DTB) to biotin by the insertion of a sulfur atom into dethiobiotin via a radical-based mechanism. The polypeptide is Biotin synthase (Chlamydia pneumoniae (Chlamydophila pneumoniae)).